Here is a 224-residue protein sequence, read N- to C-terminus: Inner membrane-spanning protein YciB (224 aa).

6 helical membrane-spanning segments follow: residues 20 to 40, 61 to 81, 86 to 106, 123 to 143, 156 to 176, and 187 to 207; these read GVNP…FFFA, IFVA…ASWL, LPIM…LTLY, LFGG…GYVF, KLTF…EVVW, and FKVW…MPLI.

Belongs to the YciB family.

It localises to the cell inner membrane. Functionally, plays a role in cell envelope biogenesis, maintenance of cell envelope integrity and membrane homeostasis. The chain is Inner membrane-spanning protein YciB from Mesorhizobium japonicum (strain LMG 29417 / CECT 9101 / MAFF 303099) (Mesorhizobium loti (strain MAFF 303099)).